The sequence spans 90 residues: Conotoxin Im6.2 (90 aa).

A signal peptide spans M1–A18. Positions R19–K29 are excised as a propeptide. 3 disulfide bridges follow: C61–C75, C68–C79, and C74–C84. E89 carries the post-translational modification Glutamic acid 1-amide.

This sequence belongs to the conotoxin O2 superfamily. As to expression, expressed by the venom duct.

The protein localises to the secreted. Functionally, probable neurotoxin. The polypeptide is Conotoxin Im6.2 (Conus imperialis (Imperial cone)).